The following is a 1025-amino-acid chain: Multidrug resistance protein MdtC (1025 aa).

12 helical membrane passes run 3 to 23, 333 to 353, 360 to 380, 387 to 407, 431 to 451, 463 to 483, 528 to 548, 853 to 873, 875 to 895, 897 to 917, 953 to 973, and 984 to 1004; these read FFAL…AITL, EVEQ…FLFL, IIPA…MYLC, LSLM…IVVL, VGFT…PLLL, FAVT…TLTP, LVGV…ISIP, VILI…LYES, VHPL…LLAL, LFNA…IGIV, PIMM…LSGG, and ITIV…TPVV.

It belongs to the resistance-nodulation-cell division (RND) (TC 2.A.6) family. MdtC subfamily. Part of a tripartite efflux system composed of MdtA, MdtB and MdtC. MdtC forms a heteromultimer with MdtB.

The protein resides in the cell inner membrane. This chain is Multidrug resistance protein MdtC, found in Shigella boydii serotype 4 (strain Sb227).